Reading from the N-terminus, the 186-residue chain is uncharacterized protein (186 aa).

The first 21 residues, M1–A21, serve as a signal peptide directing secretion. Topologically, residues E22–K142 are extracellular. N-linked (GlcNAc...) asparagine glycosylation is found at N62, N75, N93, and N104. A helical membrane pass occupies residues L143–F163. At A164–H186 the chain is on the cytoplasmic side.

It is found in the membrane. This is an uncharacterized protein from Schizosaccharomyces pombe (strain 972 / ATCC 24843) (Fission yeast).